Reading from the N-terminus, the 452-residue chain is Protein phosphatase 1F (452 aa).

The 258-residue stretch at 153–410 (LVSIHAIRNT…DNITVMVVFL (258 aa)) folds into the PPM-type phosphatase domain. 4 residues coordinate Mn(2+): D195, G196, D357, and D401. Phosphoserine is present on S452.

It belongs to the PP2C family. As to quaternary structure, associates with FEM1B. Requires Mg(2+) as cofactor. Mn(2+) is required as a cofactor. In terms of tissue distribution, expressed in the liver.

The catalysed reaction is O-phospho-L-seryl-[protein] + H2O = L-seryl-[protein] + phosphate. It catalyses the reaction O-phospho-L-threonyl-[protein] + H2O = L-threonyl-[protein] + phosphate. Functionally, dephosphorylates and concomitantly deactivates CaM-kinase II activated upon autophosphorylation, and CaM-kinases IV and I activated upon phosphorylation by CaM-kinase kinase. Promotes apoptosis. This is Protein phosphatase 1F (Ppm1f) from Mus musculus (Mouse).